We begin with the raw amino-acid sequence, 518 residues long: Cytochrome P450 26C1 (518 aa).

The chain crosses the membrane as a helical span at residues 293–313 (LLFAAFFTTASASTSLILLLL). Position 455 (C455) interacts with heme.

Belongs to the cytochrome P450 family. Requires heme as cofactor.

It is found in the membrane. The catalysed reaction is an organic molecule + reduced [NADPH--hemoprotein reductase] + O2 = an alcohol + oxidized [NADPH--hemoprotein reductase] + H2O + H(+). It carries out the reaction all-trans-retinoate + reduced [NADPH--hemoprotein reductase] + O2 = all-trans-4-hydroxyretinoate + oxidized [NADPH--hemoprotein reductase] + H2O + H(+). It catalyses the reaction all-trans-4-hydroxyretinoate + reduced [NADPH--hemoprotein reductase] + O2 = all-trans-4-oxoretinoate + oxidized [NADPH--hemoprotein reductase] + 2 H2O + H(+). The enzyme catalyses 9-cis-retinoate + reduced [NADPH--hemoprotein reductase] + O2 = 9-cis-4-hydroxyretinoate + oxidized [NADPH--hemoprotein reductase] + H2O + H(+). The catalysed reaction is 9-cis-4-hydroxyretinoate + reduced [NADPH--hemoprotein reductase] + O2 = 9-cis-4-oxoretinoate + oxidized [NADPH--hemoprotein reductase] + 2 H2O + H(+). It carries out the reaction all-trans-4-hydroxy-13,14-dihydroretinoate + reduced [NADPH--hemoprotein reductase] + O2 = all-trans-4-oxo-13,14-dihydroretinoate + oxidized [NADPH--hemoprotein reductase] + 2 H2O + H(+). It catalyses the reaction all-trans-13,14-dihydroretinoate + reduced [NADPH--hemoprotein reductase] + O2 = all-trans-4-hydroxy-13,14-dihydroretinoate + oxidized [NADPH--hemoprotein reductase] + H2O + H(+). In terms of biological role, a cytochrome P450 monooxygenase involved in the metabolism of retinoates (RAs), the active metabolites of vitamin A, and critical signaling molecules in animals. RAs exist as at least four different isomers: all-trans-RA (atRA), 9-cis-RA, 13-cis-RA, and 9,13-dicis-RA, where atRA is considered to be the biologically active isomer, although 9-cis-RA and 13-cis-RA also have activity. Catalyzes the oxidation of atRA primarily at C-4. Oxidation of atRA limits its biological activity and initiates a degradative process leading to its eventual elimination, thereby contributes to the regulation of atRA homeostasis and signaling. Able to metabolize other RAs such as 9-cis with high efficiency. Can oxidize all-trans-13,14-dihydroretinoate (DRA) to metabolites which could include all-trans-4-oxo-DRA, all-trans-4-hydroxy-DRA, all-trans-5,8-epoxy-DRA, and all-trans-18-hydroxy-DRA. Shares sequence similarity with other CYP26 family members, but has higher affinity to 9-cis-RA and is much less sensitive to the inhibitory effects of ketoconazole. In cooperation with Cyp26a1, contributes to the CNS patterning and the development of regions of higher visual acuity. This chain is Cytochrome P450 26C1, found in Mus musculus (Mouse).